We begin with the raw amino-acid sequence, 138 residues long: Histone H2B.4 (138 aa).

Residues 1-39 (MAPKAAEKKPAEKKPAGKAPAEKLPKAEKKISKDAGGSE) show a composition bias toward basic and acidic residues. The disordered stretch occupies residues 1-48 (MAPKAAEKKPAEKKPAGKAPAEKLPKAEKKISKDAGGSEKKKKKSKKS). The residue at position 2 (Ala2) is a N,N,N-trimethylalanine; alternate. Ala2 bears the N,N-dimethylalanine; alternate mark. Position 2 is an N-methylalanine; alternate (Ala2). Lys4 bears the N6-methyllysine mark. Residues Lys8 and Lys13 each carry the N6-acetyllysine modification. N6,N6-dimethyllysine is present on Lys14. N6-acetyllysine is present on residues Lys18, Lys23, Lys29, and Lys30. Residue Lys135 forms a Glycyl lysine isopeptide (Lys-Gly) (interchain with G-Cter in ubiquitin) linkage.

The protein belongs to the histone H2B family. As to quaternary structure, the nucleosome is a histone octamer containing two molecules each of H2A, H2B, H3 and H4 assembled in one H3-H4 heterotetramer and two H2A-H2B heterodimers. The octamer wraps approximately 147 bp of DNA. Can be acetylated to form H2BK6ac, H2BK33ac and H2BK34ac. Post-translationally, monoubiquitinated by BRE1 to form H2BK143ub1 and deubiquitinated by UBP26. Required for heterochromatic histone H3 di- and trimethylation at H3K4me. May give a specific tag for epigenetic transcriptional activation.

It localises to the nucleus. The protein localises to the chromosome. Functionally, core component of nucleosome. Nucleosomes wrap and compact DNA into chromatin, limiting DNA accessibility to the cellular machineries which require DNA as a template. Histones thereby play a central role in transcription regulation, DNA repair, DNA replication and chromosomal stability. DNA accessibility is regulated via a complex set of post-translational modifications of histones, also called histone code, and nucleosome remodeling. The protein is Histone H2B.4 of Arabidopsis thaliana (Mouse-ear cress).